The chain runs to 875 residues: DNA mismatch repair protein MutS (875 aa).

ATP is bound at residue 625–632 (GPNMGGKS).

This sequence belongs to the DNA mismatch repair MutS family.

This protein is involved in the repair of mismatches in DNA. It is possible that it carries out the mismatch recognition step. This protein has a weak ATPase activity. This is DNA mismatch repair protein MutS from Symbiobacterium thermophilum (strain DSM 24528 / JCM 14929 / IAM 14863 / T).